A 25-amino-acid chain; its full sequence is Dermaseptin-DI5 (25 aa).

This sequence belongs to the frog skin active peptide (FSAP) family. Dermaseptin subfamily. In terms of tissue distribution, expressed by the skin glands.

The protein localises to the secreted. Functionally, antibacterial peptide with activity against Gram-positive bacteria S.aureus and E.faecalis, and Gram-negative bacteria P.aeruginosa and E.coli. The chain is Dermaseptin-DI5 from Phyllomedusa distincta (Monkey frog).